The primary structure comprises 676 residues: UvrABC system protein B (676 aa).

The Helicase ATP-binding domain occupies 35-192 (QGVADGLMYQ…ARLVAMQYTR (158 aa)). An ATP-binding site is contributed by 48–55 (GVTGSGKT). Residues 101–124 (YYDYYQPEAYVPTRDLFIEKDSSV) carry the Beta-hairpin motif. One can recognise a Helicase C-terminal domain in the interval 439-605 (QVDDLLGEIR…GVNKAVRELI (167 aa)). The UVR domain maps to 634–669 (AREIKRLEKLMMDHARNLEFEQAAAARDALTALKNR).

The protein belongs to the UvrB family. As to quaternary structure, forms a heterotetramer with UvrA during the search for lesions. Interacts with UvrC in an incision complex.

It localises to the cytoplasm. The UvrABC repair system catalyzes the recognition and processing of DNA lesions. A damage recognition complex composed of 2 UvrA and 2 UvrB subunits scans DNA for abnormalities. Upon binding of the UvrA(2)B(2) complex to a putative damaged site, the DNA wraps around one UvrB monomer. DNA wrap is dependent on ATP binding by UvrB and probably causes local melting of the DNA helix, facilitating insertion of UvrB beta-hairpin between the DNA strands. Then UvrB probes one DNA strand for the presence of a lesion. If a lesion is found the UvrA subunits dissociate and the UvrB-DNA preincision complex is formed. This complex is subsequently bound by UvrC and the second UvrB is released. If no lesion is found, the DNA wraps around the other UvrB subunit that will check the other stand for damage. The protein is UvrABC system protein B of Bordetella avium (strain 197N).